We begin with the raw amino-acid sequence, 2201 residues long: RNA-directed RNA polymerase L (2201 aa).

Residues 26–285 (KNIMLAQTQI…VCSKSVEYTF (260 aa)) form an endonuclease region. Residues Glu-51, Asp-88, and Glu-101 each coordinate Mn(2+). Residue Lys-114 is part of the active site. Residues 1156–1352 (LDMKSVVRQS…FLSDRLNKFV (197 aa)) enclose the RdRp catalytic domain. Asp-1312 serves as a coordination point for Mg(2+).

Belongs to the Bunyavirales RNA polymerase family. In terms of assembly, homomultimer; the oligomeric structure is essential for the polymerase activity. Interacts with nucleoprotein N. Interacts with protein Z; this interaction inhibits viral transcription and replication, Z partially blocks the product exit tunnel for the releasing nascent RNA product. Mn(2+) serves as cofactor. Mg(2+) is required as a cofactor.

The protein resides in the virion. It is found in the host cytoplasm. It catalyses the reaction RNA(n) + a ribonucleoside 5'-triphosphate = RNA(n+1) + diphosphate. Functionally, RNA-dependent RNA polymerase, which is responsible for the replication and transcription of the viral RNA genome using antigenomic RNA as an intermediate. During transcription, synthesizes subgenomic RNAs and assures their capping by a cap-snatching mechanism, which involves the endonuclease activity cleaving the host capped pre-mRNAs. These short capped RNAs are then used as primers for viral transcription. The 3'-end of subgenomic mRNAs molecules are heterogeneous and not polyadenylated. The replicase function is to direct synthesis of antigenomic and genomic RNA which are encapsidated and non capped. As a consequence of the use of the same enzyme for both transcription and replication, these mechanisms need to be well coordinated. These processes may be regulated by proteins N and Z in a dose-dependent manner. Z protein inhibits the viral polymerase L und thus the viral transcription and RNA synthesis. This is RNA-directed RNA polymerase L from Oecomys bicolor (Bicolored arboreal rice rat).